The sequence spans 75 residues: Exodeoxyribonuclease 7 small subunit (75 aa).

It belongs to the XseB family. As to quaternary structure, heterooligomer composed of large and small subunits.

Its subcellular location is the cytoplasm. It catalyses the reaction Exonucleolytic cleavage in either 5'- to 3'- or 3'- to 5'-direction to yield nucleoside 5'-phosphates.. In terms of biological role, bidirectionally degrades single-stranded DNA into large acid-insoluble oligonucleotides, which are then degraded further into small acid-soluble oligonucleotides. The chain is Exodeoxyribonuclease 7 small subunit from Citrifermentans bemidjiense (strain ATCC BAA-1014 / DSM 16622 / JCM 12645 / Bem) (Geobacter bemidjiensis).